The chain runs to 217 residues: 3-oxoadipate CoA-transferase subunit B (217 aa).

Residue E50 is part of the active site.

The protein belongs to the 3-oxoacid CoA-transferase subunit B family. As to quaternary structure, heterodimer.

It carries out the reaction 3-oxoadipate + succinyl-CoA = 3-oxoadipyl-CoA + succinate. It functions in the pathway aromatic compound metabolism; beta-ketoadipate pathway; acetyl-CoA and succinyl-CoA from 3-oxoadipate: step 1/2. This Acinetobacter baylyi (strain ATCC 33305 / BD413 / ADP1) protein is 3-oxoadipate CoA-transferase subunit B (pcaJ).